A 457-amino-acid polypeptide reads, in one-letter code: Ribosomal protein uS12 methylthiotransferase RimO (457 aa).

An MTTase N-terminal domain is found at K9–K128. Residues C18, C54, C88, C163, C167, and C170 each coordinate [4Fe-4S] cluster. The Radical SAM core domain occupies S149–E384. Positions S387–V455 constitute a TRAM domain.

The protein belongs to the methylthiotransferase family. RimO subfamily. [4Fe-4S] cluster serves as cofactor.

It localises to the cytoplasm. It catalyses the reaction L-aspartate(89)-[ribosomal protein uS12]-hydrogen + (sulfur carrier)-SH + AH2 + 2 S-adenosyl-L-methionine = 3-methylsulfanyl-L-aspartate(89)-[ribosomal protein uS12]-hydrogen + (sulfur carrier)-H + 5'-deoxyadenosine + L-methionine + A + S-adenosyl-L-homocysteine + 2 H(+). In terms of biological role, catalyzes the methylthiolation of an aspartic acid residue of ribosomal protein uS12. The polypeptide is Ribosomal protein uS12 methylthiotransferase RimO (Bdellovibrio bacteriovorus (strain ATCC 15356 / DSM 50701 / NCIMB 9529 / HD100)).